The chain runs to 290 residues: MDSLANLCLKTLPYKFEPPKFLRTKYCDACRYRFLPKFSDEKFCGQCICNICNNPKNIDCPSSYISKIKPKKENKEIYITSNKFNKTCKNECNQQSNRRCLISYFTNESCKELNCCWFNKNCYMCLEYKKNLYNVNLYTIDGHCPSFKAVCFSCIKRIKTCQVCNQPLLKMYKEKQEERLKMQSLYATLADVDLKILDIYDVDNYSRKMILCAQCHIFARCFCTNTMQCFCPRQGYKCECICRRSKYFKNNVLCVKSKAACFNKMKIKRVPKWKHSVDYTFKSIYKLINV.

This is an uncharacterized protein from Lepidoptera (butterflies and moths).